A 499-amino-acid chain; its full sequence is uncharacterized protein (499 aa).

2 disordered regions span residues 76 to 118 (QATA…RLSP) and 208 to 268 (DFET…DWAN). The segment covering 87-104 (DPEKQTGKSRYHPSEEIR) has biased composition (basic and acidic residues). The span at 208–263 (DFETEDDESGDDDSEDTGEDEDEEEWVAILEDEDEDDDDDDDDDEDDDDSDSDESL) shows a compositional bias: acidic residues. Ser-355 is modified (phosphoserine). The segment at 478–499 (AEGQIRKLLFPKTNQSTQPKPK) is disordered. Polar residues predominate over residues 489 to 499 (KTNQSTQPKPK).

This is an uncharacterized protein from Arabidopsis thaliana (Mouse-ear cress).